Reading from the N-terminus, the 462-residue chain is Myo-inositol transporter 3B (462 aa).

10 helical membrane-spanning segments follow: residues 1–21 (MAIL…ASSY), 31–51 (IILG…ITET), 61–81 (IGVN…IGAG), 91–111 (LLFA…HYLP), 194–214 (LCGF…LGLS), 218–238 (LGGL…MSLV), 245–265 (GLML…IIGF), 289–309 (VVIG…SHLV), 324–344 (GSGV…VSYL), and 354–374 (GTYG…VFCF).

This sequence belongs to the major facilitator superfamily. Sugar transporter (TC 2.A.1.1) family.

The protein localises to the cell membrane. It carries out the reaction myo-inositol(out) + H(+)(out) = myo-inositol(in) + H(+)(in). In terms of biological role, transporter for myo-inositol. The sequence is that of Myo-inositol transporter 3B from Cryptococcus neoformans var. grubii serotype A (strain H99 / ATCC 208821 / CBS 10515 / FGSC 9487) (Filobasidiella neoformans var. grubii).